Consider the following 372-residue polypeptide: 4-hydroxy-3-methylbut-2-en-1-yl diphosphate synthase (flavodoxin) (372 aa).

The [4Fe-4S] cluster site is built by Cys-270, Cys-273, Cys-305, and Glu-312.

Belongs to the IspG family. [4Fe-4S] cluster serves as cofactor.

The catalysed reaction is (2E)-4-hydroxy-3-methylbut-2-enyl diphosphate + oxidized [flavodoxin] + H2O + 2 H(+) = 2-C-methyl-D-erythritol 2,4-cyclic diphosphate + reduced [flavodoxin]. The protein operates within isoprenoid biosynthesis; isopentenyl diphosphate biosynthesis via DXP pathway; isopentenyl diphosphate from 1-deoxy-D-xylulose 5-phosphate: step 5/6. Converts 2C-methyl-D-erythritol 2,4-cyclodiphosphate (ME-2,4cPP) into 1-hydroxy-2-methyl-2-(E)-butenyl 4-diphosphate. The protein is 4-hydroxy-3-methylbut-2-en-1-yl diphosphate synthase (flavodoxin) of Shewanella amazonensis (strain ATCC BAA-1098 / SB2B).